The primary structure comprises 123 residues: Large ribosomal subunit protein uL14 (123 aa).

Belongs to the universal ribosomal protein uL14 family. In terms of assembly, part of the 50S ribosomal subunit. Forms a cluster with proteins L3 and L19. In the 70S ribosome, L14 and L19 interact and together make contacts with the 16S rRNA in bridges B5 and B8.

Functionally, binds to 23S rRNA. Forms part of two intersubunit bridges in the 70S ribosome. The sequence is that of Large ribosomal subunit protein uL14 from Vibrio vulnificus (strain CMCP6).